The sequence spans 178 residues: ATP-dependent protease subunit HslV (178 aa).

The active site involves T5. 3 residues coordinate Na(+): G161, C164, and T167.

The protein belongs to the peptidase T1B family. HslV subfamily. As to quaternary structure, a double ring-shaped homohexamer of HslV is capped on each side by a ring-shaped HslU homohexamer. The assembly of the HslU/HslV complex is dependent on binding of ATP.

The protein resides in the cytoplasm. It catalyses the reaction ATP-dependent cleavage of peptide bonds with broad specificity.. Its activity is regulated as follows. Allosterically activated by HslU binding. Functionally, protease subunit of a proteasome-like degradation complex believed to be a general protein degrading machinery. The protein is ATP-dependent protease subunit HslV of Aliarcobacter butzleri (strain RM4018) (Arcobacter butzleri).